Here is a 396-residue protein sequence, read N- to C-terminus: MRFNTLDDMDLAGKLVLTRVDINVPVDGDTVTDATRITRIVPTIKDILAKGGRPVMLAHFGRPKGAYVPEMSLRVTVPALEQALGQPVNFIERPDRATLDALPEGTITLIENTRFSAMEEANDPKMAGFLASLGDVYCNDAFSAAHRAHASTEGVARLLPSCAGRLMEAELSALEAALGAPQRPVVAVVGGAKVSTKLDLLGNLIEKVDTIIIGGGMANTFLAAQGVQVGTSLCEHDLGDTARAIMQKAAAANCTLILPGDIVVAAEFKAGAANAVYDVDACPADQMILDAGPKTVETIAATFNTAKTVIWNGPLGAFEIAPFDAATVTAARAAAEETQAGKLISVAGGGDTVAALNHAGVADQFTYISTAGGAFLEWMEGKTLPGVAALEAAKPA.

Substrate-binding positions include 21–23, arginine 36, 59–62, arginine 114, and arginine 147; these read DIN and HFGR. Residues lysine 197, glutamate 319, and 349-352 each bind ATP; that span reads GGDT.

It belongs to the phosphoglycerate kinase family. As to quaternary structure, monomer.

The protein localises to the cytoplasm. The enzyme catalyses (2R)-3-phosphoglycerate + ATP = (2R)-3-phospho-glyceroyl phosphate + ADP. It functions in the pathway carbohydrate degradation; glycolysis; pyruvate from D-glyceraldehyde 3-phosphate: step 2/5. This Jannaschia sp. (strain CCS1) protein is Phosphoglycerate kinase.